The following is an 88-amino-acid chain: MKKVLVKAVHGYQRWISPALPPACRYYPTCSNYMVQAIEKHGPAKGLAMGTARILRCHPFCQPGYDLVPDHFSLRRNWAEPEKEEDSN.

This sequence belongs to the UPF0161 family.

It is found in the cell membrane. In terms of biological role, could be involved in insertion of integral membrane proteins into the membrane. This chain is Putative membrane protein insertion efficiency factor (yrcB), found in Lactococcus lactis subsp. lactis (strain IL1403) (Streptococcus lactis).